We begin with the raw amino-acid sequence, 108 residues long: uncharacterized protein (108 aa).

Positions 75–94 (TPQVSSFPSSTTSLSHSCTT) are disordered. The segment covering 79 to 94 (SSFPSSTTSLSHSCTT) has biased composition (low complexity).

This is an uncharacterized protein from Homo sapiens (Human).